We begin with the raw amino-acid sequence, 179 residues long: Large ribosomal subunit protein uL5 (179 aa).

This sequence belongs to the universal ribosomal protein uL5 family. Part of the 50S ribosomal subunit; part of the 5S rRNA/L5/L18/L25 subcomplex. Contacts the 5S rRNA and the P site tRNA. Forms a bridge to the 30S subunit in the 70S ribosome.

This is one of the proteins that bind and probably mediate the attachment of the 5S RNA into the large ribosomal subunit, where it forms part of the central protuberance. In the 70S ribosome it contacts protein S13 of the 30S subunit (bridge B1b), connecting the 2 subunits; this bridge is implicated in subunit movement. Contacts the P site tRNA; the 5S rRNA and some of its associated proteins might help stabilize positioning of ribosome-bound tRNAs. The protein is Large ribosomal subunit protein uL5 of Geobacter sulfurreducens (strain ATCC 51573 / DSM 12127 / PCA).